Consider the following 1148-residue polypeptide: Replication factor C subunit 1 (1148 aa).

Residues 46–56 (NSSRKEDDFKQ) show a composition bias toward basic and acidic residues. Disordered stretches follow at residues 46–201 (NSSR…LNDE) and 228–380 (TLAM…TNYQ). Residue K50 forms a Glycyl lysine isopeptide (Lys-Gly) (interchain with G-Cter in SUMO2) linkage. The residue at position 67 (Y67) is a Phosphotyrosine. Residues S69, S71, S73, and S108 each carry the phosphoserine modification. Position 110 is a phosphothreonine (T110). The span at 130–141 (RSTNSHLGTSNM) shows a compositional bias: polar residues. S156 carries the post-translational modification Phosphoserine. T161 and T163 each carry phosphothreonine. Residues S164, S173, and S190 each carry the phosphoserine modification. The segment covering 234–246 (EEPKTKKARKDTE) has biased composition (basic and acidic residues). S253 bears the Phosphoserine mark. Over residues 262 to 271 (EKHKYPHKVK) the composition is skewed to basic residues. S281 and S283 each carry phosphoserine. The segment covering 288–308 (SKYESSKESQQHSKSSADKIG) has biased composition (basic and acidic residues). S312 bears the Phosphoserine mark. Composition is skewed to basic and acidic residues over residues 323-353 (KRKEESSYKEIEPVASKRKENAIKLKGETKT) and 362-376 (AKKESVSPEDSEKKR). S368 is subject to Phosphoserine. The BRCT domain occupies 402-492 (GAENCLEGLI…PGKKSKYEIA (91 aa)). Composition is skewed to basic and acidic residues over residues 496-507 (EMKKESKLERTP) and 520-538 (SKKESESKKSRPTSKRDSL). Positions 496 to 538 (EMKKESKLERTPQKNVQGKRKISPSKKESESKKSRPTSKRDSL) are disordered. S537 is modified (phosphoserine). 650 to 657 (SGPPGVGK) contributes to the ATP binding site. The tract at residues 1081–1148 (KASRHSTSPS…RKGKGKSSKK (68 aa)) is disordered. The segment covering 1094 to 1105 (EYNEELNEDDSQ) has biased composition (acidic residues). Phosphoserine is present on residues S1104 and S1106. A Nuclear localization signal motif is present at residues 1120 to 1124 (IKKKT). Over residues 1130–1140 (SKPEKDKEPRK) the composition is skewed to basic and acidic residues.

It belongs to the activator 1 large subunit family. As to quaternary structure, large subunit of the RFC complex, an heteropentameric complex consisting of RFC1 and four small subunits RFC2, RFC3, RFC4 and RFC5; the RFC complex interacts with PCNA and the interaction involves RFC1. In terms of tissue distribution, wide tissue distribution. Undetectable in placental tissue.

Its subcellular location is the nucleus. Its function is as follows. Subunit of the replication factor C (RFC) complex which acts during elongation of primed DNA templates by DNA polymerases delta and epsilon, and is necessary for ATP-dependent loading of proliferating cell nuclear antigen (PCNA) onto primed DNA. This subunit binds to the primer-template junction. Binds the PO-B transcription element as well as other GA rich DNA sequences. Can bind single- or double-stranded DNA. The sequence is that of Replication factor C subunit 1 (RFC1) from Homo sapiens (Human).